A 601-amino-acid chain; its full sequence is Jacalin-related lectin 3 (601 aa).

Jacalin-type lectin domains follow at residues 13 to 155, 240 to 382, and 438 to 583; these read PASL…HTQP, AKTY…HVME, and PSGP…HMQH.

The protein belongs to the jacalin lectin family.

The sequence is that of Jacalin-related lectin 3 (JAL3) from Arabidopsis thaliana (Mouse-ear cress).